The following is a 453-amino-acid chain: Chromosomal replication initiator protein DnaA (453 aa).

Residues 1–74 (MKEKQFWNRI…GFEIYDAEIT (74 aa)) form a domain I, interacts with DnaA modulators region. The interval 74–113 (TPHYIFTKPQDTTSSQVEEATNLTLYNYSPKLVSIPYSDT) is domain II. The tract at residues 114-331 (GLKEKYTFDN…GAINDITLIA (218 aa)) is domain III, AAA+ region. 4 residues coordinate ATP: G158, G160, K161, and T162. Residues 332 to 453 (RVKKIKDITI…EIESIKKKIK (122 aa)) are domain IV, binds dsDNA.

The protein belongs to the DnaA family. Oligomerizes as a right-handed, spiral filament on DNA at oriC.

The protein resides in the cytoplasm. In terms of biological role, plays an essential role in the initiation and regulation of chromosomal replication. ATP-DnaA binds to the origin of replication (oriC) to initiate formation of the DNA replication initiation complex once per cell cycle. Binds the DnaA box (a 9 base pair repeat at the origin) and separates the double-stranded (ds)DNA. Forms a right-handed helical filament on oriC DNA; dsDNA binds to the exterior of the filament while single-stranded (ss)DNA is stabiized in the filament's interior. The ATP-DnaA-oriC complex binds and stabilizes one strand of the AT-rich DNA unwinding element (DUE), permitting loading of DNA polymerase. After initiation quickly degrades to an ADP-DnaA complex that is not apt for DNA replication. Binds acidic phospholipids. The protein is Chromosomal replication initiator protein DnaA of Streptococcus pneumoniae serotype 19F (strain G54).